The following is a 613-amino-acid chain: UvrABC system protein C (613 aa).

A GIY-YIG domain is found at 20–98 (ERPGVYLMYD…IKRHKPRYNI (79 aa)). The 36-residue stretch at 209–244 (FDVIESLGHKMQQASDEFEFEKAALYRDKISALRAI) folds into the UVR domain.

It belongs to the UvrC family. Interacts with UvrB in an incision complex.

The protein resides in the cytoplasm. In terms of biological role, the UvrABC repair system catalyzes the recognition and processing of DNA lesions. UvrC both incises the 5' and 3' sides of the lesion. The N-terminal half is responsible for the 3' incision and the C-terminal half is responsible for the 5' incision. The sequence is that of UvrABC system protein C from Hydrogenovibrio crunogenus (strain DSM 25203 / XCL-2) (Thiomicrospira crunogena).